The primary structure comprises 263 residues: Bradykinin-potentiating and C-type natriuretic peptides (263 aa).

An N-terminal signal peptide occupies residues 1–23; it reads MFVSRLAASGLLLLALMALSLDG. A propeptide spanning residues 24–30 is cleaved from the precursor; that stretch reads KPVQQWS. Glutamine 31 is modified (pyrrolidone carboxylic acid). A propeptide spanning residues 42–48 is cleaved from the precursor; sequence LVVQQWS. The residue at position 49 (glutamine 49) is a Pyrrolidone carboxylic acid. Positions 60 to 66 are excised as a propeptide; the sequence is LVVQQWS. The residue at position 67 (glutamine 67) is a Pyrrolidone carboxylic acid. Positions 78 to 84 are excised as a propeptide; the sequence is LVVQQWS. At glutamine 85 the chain carries Pyrrolidone carboxylic acid. Positions 89 to 95 are angiotensin-converting enzyme active site binding; it reads PRPKIPP. The propeptide occupies 96–102; that stretch reads LVVQQWS. Pyrrolidone carboxylic acid is present on glutamine 103. The segment at 107–113 is angiotensin-converting enzyme active site binding; it reads PRPKIPP. The propeptide occupies 114-116; the sequence is LVV. At glutamine 117 the chain carries Pyrrolidone carboxylic acid. The propeptide occupies 128–130; the sequence is LLL. Glutamine 131 bears the Pyrrolidone carboxylic acid mark. The propeptide occupies 137–241; it reads AGGTTALREE…ARRLKGLVKK (105 aa). 2 disordered regions span residues 152–171 and 177–205; these read EAAS…GSKA and RLSK…GKQA. Over residues 181–192 the composition is skewed to low complexity; sequence SKGASATSASAS. Basic and acidic residues predominate over residues 194-204; the sequence is PMRDLRTDGKQ. Cysteine 247 and cysteine 263 are oxidised to a cystine.

In the N-terminal section; belongs to the bradykinin-potentiating peptide family. It in the C-terminal section; belongs to the natriuretic peptide family. In terms of tissue distribution, expressed by the venom gland.

It localises to the secreted. Its function is as follows. Inhibits the rabbit lung angiotensin-converting enzyme (ACE) (IC(50)=15 uM). Contracts the rat gastric fundus smooth muscle in a rapid and transient manner. Causes no contraction of the rat gastric fundus smooth muscle even at high concentrations. Causes very weak contraction of the isolated guinea pig ileum. Causes weak contraction on rat uterus. Functionally, inhibits the activity of the angiotensin-converting enzyme (ACE) by a preferential interaction with its C-domain (Ki=30 nM, IC(50)=1.1 uM). It binds ACE in a zinc-independent manner. Also potentiates the hypotensive effects of bradykinin. Causes high contraction of the isolated guinea pig ileum and weak contraction on rat uterus. In terms of biological role, inhibits the activity of the angiotensin-converting enzyme (ACE) by interacting with the same potency to its C- and N-domains. Inhibits the rabbit lung angiotensin-converting enzyme (ACE) (IC(50)=7.1 uM). Causes weak contraction of the isolated guinea pig ileum. Causes weak contraction on rat uterus. Its function is as follows. Inhibits the rabbit lung angiotensin-converting enzyme (ACE) (IC(50)=46 uM). Synthetic Leu3-blomhotin contracts the rat gastric fundus smooth muscle in a rapid and transient manner. Causes moderate contraction of the isolated guinea pig ileum. Causes weak contraction on rat uterus. Causes weak contraction of the isolated guinea pig ileum. Causes about 50-fold more potentiating activity on rat uterus than on guinea pig ileum. Functionally, synthetic peptide potentiates the bradykinin in vivo. In terms of biological role, synthetic peptide does not show any bradykinin-potentiating effects. Its function is as follows. has a vasorelaxant activity in rat aortic strips and a diuretic potency in anesthetized rats. May act by activating natriuretic receptors (NPR1 and/or NPR2). The chain is Bradykinin-potentiating and C-type natriuretic peptides from Gloydius blomhoffii (Mamushi).